Here is a 251-residue protein sequence, read N- to C-terminus: Small ribosomal subunit protein uS2 (251 aa).

This sequence belongs to the universal ribosomal protein uS2 family.

This Arthrospira platensis (Spirulina platensis) protein is Small ribosomal subunit protein uS2 (rpsB).